The sequence spans 347 residues: 4-hydroxy-2-oxovalerate aldolase (347 aa).

The Pyruvate carboxyltransferase domain occupies 2 to 252 (ILISDATLRD…DTRTTFEHVM (251 aa)). 10-11 (RD) contacts substrate. D11 contributes to the Mn(2+) binding site. The Proton acceptor role is filled by H14. Substrate-binding residues include S164 and H191. Mn(2+) is bound by residues H191 and H193.

The protein belongs to the 4-hydroxy-2-oxovalerate aldolase family.

The catalysed reaction is (S)-4-hydroxy-2-oxopentanoate = acetaldehyde + pyruvate. This chain is 4-hydroxy-2-oxovalerate aldolase (mhpE), found in Burkholderia thailandensis (strain ATCC 700388 / DSM 13276 / CCUG 48851 / CIP 106301 / E264).